Reading from the N-terminus, the 723-residue chain is Polyribonucleotide nucleotidyltransferase (723 aa).

Residues D488 and D494 each coordinate Mg(2+). A KH domain is found at 555–614 (PKIITLNIKPEKIKDVIGPGGKQINAIIDETGVKIDIEQDGTVYIASQDQAMNRKAIAII). Residues 624 to 692 (GEVYTGKVRR…QQGRVNLSRK (69 aa)) form the S1 motif domain. A disordered region spans residues 692 to 723 (KALLEKKEQPEGDKKPQAEKKFYPKTKKPESK). Positions 693–723 (ALLEKKEQPEGDKKPQAEKKFYPKTKKPESK) are enriched in basic and acidic residues.

Belongs to the polyribonucleotide nucleotidyltransferase family. Requires Mg(2+) as cofactor.

The protein localises to the cytoplasm. The catalysed reaction is RNA(n+1) + phosphate = RNA(n) + a ribonucleoside 5'-diphosphate. Involved in mRNA degradation. Catalyzes the phosphorolysis of single-stranded polyribonucleotides processively in the 3'- to 5'-direction. The protein is Polyribonucleotide nucleotidyltransferase of Listeria monocytogenes serovar 1/2a (strain ATCC BAA-679 / EGD-e).